Reading from the N-terminus, the 890-residue chain is Translation initiation factor IF-2 (890 aa).

Disordered regions lie at residues Lys31 to Pro164 and Phe189 to Lys266. The segment covering Ser42–Val54 has biased composition (basic and acidic residues). Residues Lys55–Ser72 are compositionally biased toward low complexity. A compositionally biased stretch (acidic residues) spans Pro114–Ser128. 2 stretches are compositionally biased toward basic and acidic residues: residues Pro149 to Glu163 and Pro242 to Lys266. A tr-type G domain is found at Ile395–Lys564. The interval Gly404 to Thr411 is G1. Position 404–411 (Gly404–Thr411) interacts with GTP. The G2 stretch occupies residues Ala429–His433. The segment at Asp450–Gly453 is G3. GTP-binding positions include Asp450–His454 and Asn504–Asp507. A G4 region spans residues Asn504–Asp507. The segment at Ser540–Lys542 is G5.

Belongs to the TRAFAC class translation factor GTPase superfamily. Classic translation factor GTPase family. IF-2 subfamily.

The protein resides in the cytoplasm. Its function is as follows. One of the essential components for the initiation of protein synthesis. Protects formylmethionyl-tRNA from spontaneous hydrolysis and promotes its binding to the 30S ribosomal subunits. Also involved in the hydrolysis of GTP during the formation of the 70S ribosomal complex. This Chlamydia pneumoniae (Chlamydophila pneumoniae) protein is Translation initiation factor IF-2 (infB).